The primary structure comprises 299 residues: Xyloglucan endotransglucosylase protein 6 (299 aa).

Residues 1–25 (MASSLTLPMAMAFTLLALSFASAMG) form the signal peptide. Residues 26 to 219 (GSMNSSRFDE…WSHAPFVASY (194 aa)) form the GH16 domain. Glu-105 functions as the Nucleophile in the catalytic mechanism. Glu-109 functions as the Proton donor in the catalytic mechanism. Glu-109 serves as a coordination point for xyloglucan. Asn-113 carries N-linked (GlcNAc...) asparagine glycosylation. Residues 122–124 (QTN), 132–134 (NRE), 198–199 (DW), and Gly-203 each bind xyloglucan. Cystine bridges form between Cys-227-Cys-242 and Cys-281-Cys-294. Arg-286 provides a ligand contact to xyloglucan.

The protein belongs to the glycosyl hydrolase 16 family. XTH group 1 subfamily. Contains at least one intrachain disulfide bond essential for its enzymatic activity. In terms of tissue distribution, highest expression in ripe leaves after full expansion. Also expressed in fruits, and at a lower level in flowers and stems (picked at anthesis).

The protein resides in the secreted. It localises to the cell wall. It is found in the extracellular space. Its subcellular location is the apoplast. It carries out the reaction breaks a beta-(1-&gt;4) bond in the backbone of a xyloglucan and transfers the xyloglucanyl segment on to O-4 of the non-reducing terminal glucose residue of an acceptor, which can be a xyloglucan or an oligosaccharide of xyloglucan.. Its function is as follows. Catalyzes xyloglucan endotransglycosylation (XET). Cleaves and religates xyloglucan polymers. Does not catalyze xyloglucan endohydrolysis (XEH). Probably involved in cell wall restructuring during postharvest fruit softening. The polypeptide is Xyloglucan endotransglucosylase protein 6 (Diospyros kaki (Kaki persimmon)).